The primary structure comprises 411 residues: Cytochrome P450 monooxygenase sirE (411 aa).

N-linked (GlcNAc...) asparagine glycans are attached at residues N12 and N149. Residues 181–203 (FLNVISIFTVMMASLNVLYDILA) traverse the membrane as a helical segment. N342 carries an N-linked (GlcNAc...) asparagine glycan. C352 contacts heme.

It belongs to the cytochrome P450 family. Requires heme as cofactor.

It is found in the membrane. The protein operates within mycotoxin biosynthesis. Functionally, cytochrome P450 monooxygenase; part of the gene cluster that mediates the biosynthesis of sirodesmin PL, an epipolythiodioxopiperazine (ETP) characterized by a disulfide bridged cyclic dipeptide and that acts as a phytotoxin which is involved in the blackleg didease of canola. SirD catalyzes the O-prenylation of L-tyrosine (L-Tyr) in the presence of dimethylallyl diphosphate (DMAPP) to yield 4-O-dimethylallyl-L-Tyr, and therefore represents probably the first pathway-specific enzyme in the biosynthesis of sirodesmin PL. 4-O-dimethylallyl-L-Tyr, then undergoes condensation with L-Ser in a reaction catalyzed by the non-ribosomal peptide synthase sirP to form the diketopiperazine (DKP) backbone. Further bishydroxylation of the DKP performed by the cytochrome P450 monooxygenase sirC leads to the production of the intermediate phomamide. This step is essential to form the reactive thiol group required for toxicity of sirodesmin PL. The next steps of sirodesmin biosynthesis are not well understood yet, but some predictions could be made from intermediate compounds identification. Phomamide is converted into phomalizarine via oxidation, probably by sirT. Further oxidation, methylation (by sirM or sirN) and reduction steps convert phomalizarine to deacetyl sirodesmin. Finally, acetyltransferase sirH probably acetylates deacetyl sirodesmin to produce sirodesmin PL. The protein is Cytochrome P450 monooxygenase sirE of Leptosphaeria maculans (Blackleg fungus).